A 921-amino-acid chain; its full sequence is MGKKQEKKTAKGRLDKFYWLAKEQGYRSRAAFKLVQLNKKFNFLEKARCCIDLCAAPGGWLQVASKFMPANSLIVGVDLVPIKPIPRTITFAEDINSYKCRDQLRQILKDWKADIVIHDGAPNVGTAWVQDAYAQSELTLQSLRLAVEFLTAGGTFVTKVFRSKDYNNLLWVFNQLFKKVEATKPSSSRNVSAEIFVVCQGYKNPARIDPKFLDPRHVFKELDPASLADQDQEAGVPLSLKGTSAGNAHANVFEPKKIRRNREGYADGDYTLFHSLDAMDFIKGQDVIGMLGSYNQISFESDESKKLLSLPDTNDEMRENCSDLKVLGKKDFRNLMNWRKEVRLALGIDLPKSKHQDLAEQTQTVEVEEMDEDDQIDDELARLNEEAARKARKERRRKNELRQKKILKMQLQMTTPMDIGMDVMDDQLGAGNGDMFEISSGERVSKKALIQQADVSDDESETIVSSQHTDDDDPETRARRLDAEMDALYDEFKQKQSERDAKFRAKQARLQDAKNDSWHGIKDDEENDEDDDEANLSDESEGGYDLVQRRKEQEETFDTDDEEDEEDERLEREATQHSKKRKRDLAAPTADSFEMDAKPPKRSLVHSLVSDADVSAQQSREASIWFDNPLFKDLELDEQDAQEALEDDQDDEDAWEEEQDDEDDAEESDSEVEGEQEVEDDDFEVVPQDQEEHAIPDEEWDLNGEDEEAGKQKRIKDHGLATAEAVALAQALVNRQITKEDLMDQGFSKHNFVDKDGLPTWFLDDEQKHYKANIPITKEAIQALRERQRALDARPIKKVAEAKARKKMRTLRRLEKAQKKAETINENEDISEKEKSNTINKLLAKSVKGAQKKKEVQLVVAKGVNRGLKGRPKGTKGRYKMVDPRMKKELRAFKRKAKRDGKKLGSSNSKPRVPKGYGPRN.

G58, W60, D78, D94, and D119 together coordinate S-adenosyl-L-methionine. K159 (proton acceptor) is an active-site residue. Residues 367-414 (VEEMDEDDQIDDELARLNEEAARKARKERRRKNELRQKKILKMQLQMT) are a coiled coil. 5 disordered regions span residues 448–476 (ALIQQADVSDDESETIVSSQHTDDDDPET), 491–604 (EFKQ…KRSL), 635–713 (ELDE…GKQK), 814–835 (LEKAQKKAETINENEDISEKEK), and 866–921 (RGLK…GPRN). Positions 491–522 (EFKQKQSERDAKFRAKQARLQDAKNDSWHGIK) are enriched in basic and acidic residues. 4 stretches are compositionally biased toward acidic residues: residues 523 to 542 (DDEENDEDDDEANLSDESEG), 555 to 568 (ETFDTDDEEDEEDE), 635 to 684 (ELDE…DDFE), and 697 to 708 (DEEWDLNGEDEE). Residues 796-835 (IKKVAEAKARKKMRTLRRLEKAQKKAETINENEDISEKEK) are a coiled coil. Residues 814–823 (LEKAQKKAET) show a composition bias toward basic and acidic residues. The segment covering 868–879 (LKGRPKGTKGRY) has biased composition (basic residues). Residues 880–892 (KMVDPRMKKELRA) are compositionally biased toward basic and acidic residues.

Belongs to the class I-like SAM-binding methyltransferase superfamily. RNA methyltransferase RlmE family. SPB1 subfamily. As to quaternary structure, component of the nucleolar and nucleoplasmic pre-60S ribosomal particle.

The protein localises to the nucleus. It localises to the nucleolus. The catalysed reaction is a ribonucleotide in rRNA + S-adenosyl-L-methionine = a 2'-O-methylribonucleotide in rRNA + S-adenosyl-L-homocysteine + H(+). Its function is as follows. Required for proper assembly of pre-ribosomal particles during the biogenesis of the 60S ribosomal subunit. This Mycosarcoma maydis (Corn smut fungus) protein is AdoMet-dependent rRNA methyltransferase SPB1.